The chain runs to 424 residues: Tyrosine--tRNA ligase (424 aa).

Tyr37 lines the L-tyrosine pocket. Residues 42 to 51 carry the 'HIGH' region motif; it reads PTADSLHLGH. 2 residues coordinate L-tyrosine: Tyr175 and Gln179. The 'KMSKS' region signature appears at 235 to 239; sequence KFGKT. Lys238 is an ATP binding site. Positions 357–414 constitute an S4 RNA-binding domain; that stretch reads ADLQQALVNAELVPSRGQARTMIGSNAVAINGEKQADPEYVFTDADRLFGRYTLLRRG.

The protein belongs to the class-I aminoacyl-tRNA synthetase family. TyrS type 1 subfamily. As to quaternary structure, homodimer.

The protein resides in the cytoplasm. It catalyses the reaction tRNA(Tyr) + L-tyrosine + ATP = L-tyrosyl-tRNA(Tyr) + AMP + diphosphate + H(+). Functionally, catalyzes the attachment of tyrosine to tRNA(Tyr) in a two-step reaction: tyrosine is first activated by ATP to form Tyr-AMP and then transferred to the acceptor end of tRNA(Tyr). The protein is Tyrosine--tRNA ligase of Yersinia pestis bv. Antiqua (strain Antiqua).